Here is a 353-residue protein sequence, read N- to C-terminus: Pleckstrin-2 (353 aa).

The residue at position 1 (M1) is an N-acetylmethionine. The 101-residue stretch at G4 to H104 folds into the PH 1 domain. S120 is modified (phosphoserine). The DEP domain occupies S139–E225. Residues T247–T353 form the PH 2 domain.

Its subcellular location is the cell projection. It is found in the lamellipodium membrane. The protein resides in the cytoplasm. It localises to the cytoskeleton. May help orchestrate cytoskeletal arrangement. Contribute to lamellipodia formation. The chain is Pleckstrin-2 (PLEK2) from Homo sapiens (Human).